Consider the following 113-residue polypeptide: Iron-sulfur cluster assembly protein CyaY (113 aa).

Belongs to the frataxin family.

Functionally, involved in iron-sulfur (Fe-S) cluster assembly. May act as a regulator of Fe-S biogenesis. The protein is Iron-sulfur cluster assembly protein CyaY of Ralstonia nicotianae (strain ATCC BAA-1114 / GMI1000) (Ralstonia solanacearum).